Consider the following 570-residue polypeptide: Protein misato homolog 1 (570 aa).

Serine 495 bears the Phosphoserine mark.

This sequence belongs to the misato family.

Its subcellular location is the mitochondrion outer membrane. The protein resides in the cytoplasm. Functionally, involved in the regulation of mitochondrial distribution and morphology. Required for mitochondrial fusion and mitochondrial network formation. In Pongo pygmaeus (Bornean orangutan), this protein is Protein misato homolog 1 (MSTO1).